The following is a 4226-amino-acid chain: Guanylate cyclase alpha (4226 aa).

Residues 1–104 are Cytoplasmic-facing; that stretch reads MSDSKKHYNE…SFIFKGLYEQ (104 aa). A helical transmembrane segment spans residues 105–125; sequence FLRLPNIWFLLISLLEFIPQY. Residues 126 to 131 lie on the Extracellular side of the membrane; it reads QNLSNY. N-linked (GlcNAc...) asparagine glycosylation is present at Asn-127. The chain crosses the membrane as a helical span at residues 132-152; sequence MYYSKHSSFFLLLFFICVSII. The Cytoplasmic segment spans residues 153–337; that stretch reads KNIYEDSRRS…LGYVNKELNS (185 aa). Residues 338-358 form a helical membrane-spanning segment; sequence YTIIGLIFTFICVFISVLFKW. Over 359-392 the chain is Extracellular; that stretch reads TEDDKFRNGSHFFLITVKDNICESIVKYTLLYSN. Asn-366 is a glycosylation site (N-linked (GlcNAc...) asparagine). The chain crosses the membrane as a helical span at residues 393–413; sequence IIPISILISVDLISILQSILI. Topologically, residues 414–2083 are cytoplasmic; that stretch reads ENDNHISTFE…FIYGSKHLYT (1670 aa). Disordered regions lie at residues 552–572, 832–904, 968–989, and 1740–1765; these read EHSQ…NNIC, SSKN…SNND, INNN…KSSS, and NINK…NNSN. Residues 558–570 are compositionally biased toward low complexity; sequence DNNNNNDNNNNNN. Residues 838-847 are compositionally biased toward acidic residues; it reads TLDDPTELIS. Basic and acidic residues predominate over residues 854–873; the sequence is LRDKYEHTSDKKNDTNKNRD. Positions 874-904 are enriched in low complexity; that stretch reads GANNSNNNNNKDVSNNKNKNNNNYNYNSNND. Residues 1745–1754 show a composition bias toward basic and acidic residues; that stretch reads YKYDKNDKHN. The span at 1755–1765 shows a compositional bias: low complexity; sequence NNNNNNNNNSN. The chain crosses the membrane as a helical span at residues 2084-2104; the sequence is ISIILYWNFFKNILLILPIFF. The Extracellular segment spans residues 2105 to 2119; that stretch reads YQAYASWSCVKIYPE. The chain crosses the membrane as a helical span at residues 2120–2140; the sequence is LLYTFFSIFWVFIPIIYYMFL. Residues 2141–2169 lie on the Cytoplasmic side of the membrane; sequence QHNLNYDILYNIPLFYALSRRRYNMNCFK. The helical transmembrane segment at 2170–2190 threads the bilayer; it reads FLPWIFEAIFYSMIIYFFAYA. The Extracellular portion of the chain corresponds to 2191–2202; that stretch reads ALKENSHLNNGE. Residues 2203-2223 form a helical membrane-spanning segment; that stretch reads VITINTFGNICFIGCLLISIL. The Cytoplasmic portion of the chain corresponds to 2224-2235; the sequence is RLFLEGSLWSPS. Residues 2236–2256 traverse the membrane as a helical segment; sequence ILITCFGCFLFVFFPSLLFIC. Residues 2257–2275 lie on the Extracellular side of the membrane; sequence FAYLSNEYIREVFRQTFLW. A helical transmembrane segment spans residues 2276–2296; the sequence is APLYVLLILWFSTCIISYIFI. The Cytoplasmic portion of the chain corresponds to 2297–2787; it reads NFTKSILFPN…QIHKKNKFYK (491 aa). A disordered region spans residues 2477–2505; sequence NNDNNNDDNDNDNNNNNNNNDNYNNNDHN. Residues 2488-2502 show a composition bias toward low complexity; it reads DNNNNNNNNDNYNNN. Residues 2788–2808 traverse the membrane as a helical segment; that stretch reads TFTPWYRFIFLLLGVFFLYVW. At 2809–2828 the chain is on the extracellular side; that stretch reads KLESSLSQLWNMPSDASTDV. Residues 2829-2849 form a helical membrane-spanning segment; the sequence is FILFLSLLLELVLLAATVTTF. Residues 2850–2860 lie on the Cytoplasmic side of the membrane; sequence FSNIFIENFNK. A helical membrane pass occupies residues 2861 to 2881; the sequence is IISAVVILIITYHVVSYSVTH. The Extracellular portion of the chain corresponds to 2882-2900; sequence IDGVFQAVLFPLYTFVILR. The helical transmembrane segment at 2901–2921 threads the bilayer; that stretch reads LPFVNAVLCNIIFLGLFIIRF. Residues 2922–2930 lie on the Cytoplasmic side of the membrane; the sequence is NGDHFLDKK. Residues 2931-2951 traverse the membrane as a helical segment; the sequence is GLAHYIPLFIGVDVFVGFVGY. Topologically, residues 2952-3008 are extracellular; that stretch reads RLEYNQRKNFLLEYSVESSRRKQREILNTMLPPFVVDEMIYSELNEEGIPISLKAED. The helical transmembrane segment at 3009-3029 threads the bilayer; sequence ISTVTIIFCDIYDFQNIVASI. In terms of domain architecture, Guanylate cyclase 1 spans 3013–3270; sequence TIIFCDIYDF…DTVNTASRMK (258 aa). The Cytoplasmic portion of the chain corresponds to 3030–3738; the sequence is EPTRLVEVLD…SNINSIEQAL (709 aa). Disordered regions lie at residues 3077–3150 and 3201–3230; these read EDEL…FEED and DAND…NNKP. Low complexity-rich tracts occupy residues 3083–3098 and 3108–3138; these read NKYS…NYYY and NNNN…NNVN. A compositionally biased stretch (acidic residues) spans 3140 to 3150; that stretch reads SDDDGDFFEED. Residues 3201-3220 are compositionally biased toward basic and acidic residues; it reads DANDDTHNVNDSFNNDKAEN. The chain crosses the membrane as a helical span at residues 3739–3759; that stretch reads IIFLVTFVMQTLISSTVSIVF. Residues 3760 to 3773 lie on the Extracellular side of the membrane; the sequence is IDHKRATQTLHINY. A helical transmembrane segment spans residues 3774–3794; sequence FAYWSVRSVYTFFGFVLWLLF. Residues 3795–3811 lie on the Cytoplasmic side of the membrane; sequence HYRTRPEVSSLLNIKWM. The helical transmembrane segment at 3812-3832 threads the bilayer; the sequence is IFFLNLLFISAACVFSIAYLW. At 3833–3840 the chain is on the extracellular side; that stretch reads AISETDQT. A helical transmembrane segment spans residues 3841–3861; sequence TSYTIWMTNDTIEFFFYLVIL. Topologically, residues 3862–3871 are cytoplasmic; it reads HHNTGMLFQT. Residues 3872–3892 traverse the membrane as a helical segment; that stretch reads CILVDLLFITMSLTFIATSVV. A topological domain (extracellular) is located at residue Lys-3893. A helical transmembrane segment spans residues 3894–3914; sequence TITTDSTVLLIPWYVAFNLIS. Over 3915-4226 the chain is Cytoplasmic; that stretch reads TYCKESIDRR…INVNDRQSNL (312 aa). One can recognise a Guanylate cyclase 2 domain in the interval 3970–4104; it reads TFLFADICGF…IDVLTGNLME (135 aa). The Mg(2+) site is built by Asp-3975, Ile-3976, and Asp-4019.

It in the N-terminal section; belongs to the cation transport ATPase (P-type) (TC 3.A.3) family. Type IV subfamily. The protein in the C-terminal section; belongs to the adenylyl cyclase class-4/guanylyl cyclase family. It depends on Mg(2+) as a cofactor. Mn(2+) serves as cofactor.

It localises to the cell membrane. The protein localises to the cytoplasmic vesicle membrane. The enzyme catalyses GTP = 3',5'-cyclic GMP + diphosphate. Functionally, catalyzes the synthesis of the second messenger cGMP from GTP. In asexual blood stage schizonts, required for cGMP production which is essential for PKG activation, PKG-dependent Ca(2+) release, and ultimately merozoite egress from host erythrocytes. This Plasmodium falciparum (isolate 3D7) protein is Guanylate cyclase alpha.